A 348-amino-acid chain; its full sequence is Phosphate acyltransferase (348 aa).

It belongs to the PlsX family. As to quaternary structure, homodimer. Probably interacts with PlsY.

The protein localises to the cytoplasm. It catalyses the reaction a fatty acyl-[ACP] + phosphate = an acyl phosphate + holo-[ACP]. Its pathway is lipid metabolism; phospholipid metabolism. Catalyzes the reversible formation of acyl-phosphate (acyl-PO(4)) from acyl-[acyl-carrier-protein] (acyl-ACP). This enzyme utilizes acyl-ACP as fatty acyl donor, but not acyl-CoA. This chain is Phosphate acyltransferase, found in Pectobacterium atrosepticum (strain SCRI 1043 / ATCC BAA-672) (Erwinia carotovora subsp. atroseptica).